The sequence spans 86 residues: Omega-theraphotoxin-Hhn1d (86 aa).

An N-terminal signal peptide occupies residues Met1–Ala21. The propeptide occupies Ser22–Arg50. Disulfide bonds link Cys52–Cys66, Cys59–Cys71, and Cys65–Cys78.

The protein belongs to the neurotoxin 10 (Hwtx-1) family. 17 (Hntx-9) subfamily. As to expression, expressed by the venom gland.

It localises to the secreted. Ion channel inhibitor. The protein is Omega-theraphotoxin-Hhn1d of Cyriopagopus hainanus (Chinese bird spider).